An 87-amino-acid chain; its full sequence is Translation initiation factor IF-1 2 (87 aa).

The S1-like domain occupies 1-72; the sequence is MAKEELLEMQ…SKGRITFRHI (72 aa).

This sequence belongs to the IF-1 family. As to quaternary structure, component of the 30S ribosomal translation pre-initiation complex which assembles on the 30S ribosome in the order IF-2 and IF-3, IF-1 and N-formylmethionyl-tRNA(fMet); mRNA recruitment can occur at any time during PIC assembly.

It is found in the cytoplasm. In terms of biological role, one of the essential components for the initiation of protein synthesis. Stabilizes the binding of IF-2 and IF-3 on the 30S subunit to which N-formylmethionyl-tRNA(fMet) subsequently binds. Helps modulate mRNA selection, yielding the 30S pre-initiation complex (PIC). Upon addition of the 50S ribosomal subunit IF-1, IF-2 and IF-3 are released leaving the mature 70S translation initiation complex. In Dechloromonas aromatica (strain RCB), this protein is Translation initiation factor IF-1 2.